A 382-amino-acid chain; its full sequence is tRNA-specific 2-thiouridylase MnmA (382 aa).

Residues 18-25 and Leu44 contribute to the ATP site; that span reads AMSGGVDS. Cys112 functions as the Nucleophile in the catalytic mechanism. Cys112 and Cys209 are disulfide-bonded. Gly136 serves as a coordination point for ATP. Residues 159 to 161 form an interaction with tRNA region; the sequence is RDQ. Catalysis depends on Cys209, which acts as the Cysteine persulfide intermediate.

Belongs to the MnmA/TRMU family.

It is found in the cytoplasm. It catalyses the reaction S-sulfanyl-L-cysteinyl-[protein] + uridine(34) in tRNA + AH2 + ATP = 2-thiouridine(34) in tRNA + L-cysteinyl-[protein] + A + AMP + diphosphate + H(+). Its function is as follows. Catalyzes the 2-thiolation of uridine at the wobble position (U34) of tRNA, leading to the formation of s(2)U34. The protein is tRNA-specific 2-thiouridylase MnmA of Methylobacterium sp. (strain 4-46).